The chain runs to 321 residues: 5,10-methylenetetrahydromethanopterin reductase (321 aa).

This sequence belongs to the mer family.

It is found in the cytoplasm. The catalysed reaction is 5-methyl-5,6,7,8-tetrahydromethanopterin + oxidized coenzyme F420-(gamma-L-Glu)(n) + H(+) = 5,10-methylenetetrahydromethanopterin + reduced coenzyme F420-(gamma-L-Glu)(n). The protein operates within one-carbon metabolism; methanogenesis from CO(2); methyl-coenzyme M from 5,10-methylene-5,6,7,8-tetrahydromethanopterin: step 1/2. Functionally, catalyzes the reversible reduction of methylene-H(4)MPT to methyl-H(4)MPT. This is 5,10-methylenetetrahydromethanopterin reductase from Methanothermobacter thermautotrophicus (strain ATCC 29096 / DSM 1053 / JCM 10044 / NBRC 100330 / Delta H) (Methanobacterium thermoautotrophicum).